Consider the following 369-residue polypeptide: 3-dehydroquinate synthase (369 aa).

NAD(+)-binding positions include 110–114, 134–135, K147, K156, and 174–177; these read GVIGD, TT, and TLKT. Positions 189, 254, and 271 each coordinate Zn(2+).

The protein belongs to the sugar phosphate cyclases superfamily. Dehydroquinate synthase family. The cofactor is Co(2+). Requires Zn(2+) as cofactor. NAD(+) is required as a cofactor.

The protein localises to the cytoplasm. The enzyme catalyses 7-phospho-2-dehydro-3-deoxy-D-arabino-heptonate = 3-dehydroquinate + phosphate. The protein operates within metabolic intermediate biosynthesis; chorismate biosynthesis; chorismate from D-erythrose 4-phosphate and phosphoenolpyruvate: step 2/7. In terms of biological role, catalyzes the conversion of 3-deoxy-D-arabino-heptulosonate 7-phosphate (DAHP) to dehydroquinate (DHQ). In Cyanothece sp. (strain PCC 7425 / ATCC 29141), this protein is 3-dehydroquinate synthase.